Consider the following 433-residue polypeptide: Forkhead box protein A2-B (433 aa).

Residues 147 to 241 (KPPYSYISLI…ENGCYLRRQK (95 aa)) constitute a DNA-binding region (fork-head). Residues 247 to 260 (KKPSLREGGGKKLS) show a composition bias toward basic and acidic residues. Disordered stretches follow at residues 247-337 (KKPS…QSHL) and 407-433 (SGLEPSPISSDTSYYQGGYSRPIMNSS). Low complexity predominate over residues 261-282 (EGASSVGSVGNSSSERSVGNES). Residues 292–302 (EQKRSLVDMKS) are compositionally biased toward basic and acidic residues. The segment covering 315–331 (ASQAQHLLSQHHSVLSH) has biased composition (low complexity). The segment covering 407–421 (SGLEPSPISSDTSYY) has biased composition (polar residues).

It localises to the nucleus. Its function is as follows. Acts as a transcriptional activator during early development, limiting the extent of mesoderm formation in the gastrula. Binds to DNA via the target sequence 5'-GT[AC]AACA-3', with 5'-GTAAACA-3' being the preferred binding site. This is Forkhead box protein A2-B (foxa2-b) from Xenopus laevis (African clawed frog).